We begin with the raw amino-acid sequence, 671 residues long: NADPH--cytochrome P450 reductase (671 aa).

The Lumenal segment spans residues 1–14 (MSAEHVEEVVSEEP). Residues 15–35 (FLGTLDIALLVVLLVGATWYF) traverse the membrane as a helical segment. At 36–671 (MRSRKKEEAP…QKRYSADVWS (636 aa)) the chain is on the cytoplasmic side. The Flavodoxin-like domain occupies 77-221 (LVVFYGSQTG…DFITWKDRFW (145 aa)). Residues 83-88 (SQTGTA), 135-138 (ATYG), 170-179 (LGNKTYEHYN), and D205 contribute to the FMN site. Residues 276–515 (KNPFLASVIV…FIRKSQFRLP (240 aa)) enclose the FAD-binding FR-type domain. R295 contacts NADP(+). FAD is bound by residues 451–454 (RYYS), 469–471 (TAV), Y475, and 485–488 (GVAT). NADP(+)-binding positions include T529, 589-590 (SR), 595-599 (KIYVT), and D632. W670 is an FAD binding site.

The protein belongs to the NADPH--cytochrome P450 reductase family. In the N-terminal section; belongs to the flavodoxin family. This sequence in the C-terminal section; belongs to the flavoprotein pyridine nucleotide cytochrome reductase family. It depends on FAD as a cofactor. FMN serves as cofactor.

The protein resides in the endoplasmic reticulum membrane. The catalysed reaction is 2 oxidized [cytochrome P450] + NADPH = 2 reduced [cytochrome P450] + NADP(+) + H(+). Functionally, this enzyme is required for electron transfer from NADP to cytochrome P450 in microsomes. It can also provide electron transfer to heme oxygenase and cytochrome B5. In Musca domestica (House fly), this protein is NADPH--cytochrome P450 reductase.